Here is a 172-residue protein sequence, read N- to C-terminus: Epithelial membrane protein 2 (172 aa).

4 helical membrane passes run 1-21 (MLVI…LLFI), 72-92 (TMIL…LQLF), 100-120 (FVLT…GASV), and 148-168 (FILA…YMIL).

Belongs to the PMP-22/EMP/MP20 family. Interacts with PTK2; regulates PTK2 activation and localization. Interacts with ITGB3; regulates the levels of the heterodimer ITGA5-ITGB3 integrin surface expression. Interacts with P2RX7 (via C-terminus). Interacts with ITGB1; the interaction may be direct or indirect and ITGB1 has a heterodimer form. As to expression, expressed in glomeruli.

It is found in the golgi apparatus membrane. Its subcellular location is the cell membrane. The protein resides in the apical cell membrane. The protein localises to the membrane raft. It localises to the cytoplasm. It is found in the nucleus. Its subcellular location is the perinuclear region. Functions as a key regulator of cell membrane composition by regulating protein surface expression. Also, plays a role in regulation of processes including cell migration, cell proliferation, cell contraction and cell adhesion. Regulates transepithelial migration of neutrophils into the alveolar lumen, potentially via mediation of cell surface expression of adhesion markers and lipid raft formation. Negatively regulates caveolae formation by reducing CAV1 expression and CAV1 amount by increasing lysosomal degradation. Facilitates surface trafficking and the formation of lipid rafts bearing GPI-anchor proteins. Regulates surface expression of MHC1 and ICAM1 proteins increasing susceptibility to T-cell mediated cytotoxicity. Regulates the plasma membrane expression of the integrin heterodimers ITGA6-ITGB1, ITGA5-ITGB3 and ITGA5-ITGB1 resulting in modulation of cell-matrix adhesion. Also regulates many processes through PTK2. Regulates blood vessel endothelial cell migration and angiogenesis by regulating VEGF protein expression through PTK2 activation. Regulates cell migration and cell contraction through PTK2 and SRC activation. Regulates focal adhesion density, F-actin conformation and cell adhesion capacity through interaction with PTK2. Positively regulates cell proliferation. Plays a role during cell death and cell blebbing. Promotes angiogenesis and vasculogenesis through induction of VEGFA via a HIF1A-dependent pathway. Also plays a role in embryo implantation by regulating surface trafficking of integrin heterodimer ITGA5-ITGB3. Plays a role in placental angiogenesis and uterine natural killer cell regulation at the maternal-fetal placental interface, however not required in the maternal tissues for a viable pregnancy. Involved in the early stages of embryogenic development and cardiogenesis, potentially via regulation of epithelial-mesenchymal transition timing. May play a role in glomerular filtration. The protein is Epithelial membrane protein 2 (Emp2) of Rattus norvegicus (Rat).